The following is a 511-amino-acid chain: AMP phosphorylase (511 aa).

AMP contacts are provided by residues Gly168, 194–199 (SRAITS), and Thr203. Asp256 (proton donor) is an active-site residue. Ser262 and Lys286 together coordinate AMP.

It belongs to the thymidine/pyrimidine-nucleoside phosphorylase family. Type 2 subfamily.

The catalysed reaction is AMP + phosphate = alpha-D-ribose 1,5-bisphosphate + adenine. The enzyme catalyses CMP + phosphate = cytosine + alpha-D-ribose 1,5-bisphosphate. It carries out the reaction UMP + phosphate = alpha-D-ribose 1,5-bisphosphate + uracil. In terms of biological role, catalyzes the conversion of AMP and phosphate to adenine and ribose 1,5-bisphosphate (R15P). Exhibits phosphorylase activity toward CMP and UMP in addition to AMP. Functions in an archaeal AMP degradation pathway, together with R15P isomerase and RubisCO. The chain is AMP phosphorylase from Thermofilum pendens (strain DSM 2475 / Hrk 5).